We begin with the raw amino-acid sequence, 403 residues long: 26S proteasome regulatory subunit 6B homolog (403 aa).

The residue at position 1 (Met1) is an N-acetylmethionine. 191–198 serves as a coordination point for ATP; sequence GPPGTGKT.

Belongs to the AAA ATPase family.

Its subcellular location is the cytoplasm. The protein resides in the nucleus. In terms of biological role, the 26S proteasome is involved in the ATP-dependent degradation of ubiquitinated proteins. The regulatory (or ATPase) complex confers ATP dependency and substrate specificity to the 26S complex. In Dictyostelium discoideum (Social amoeba), this protein is 26S proteasome regulatory subunit 6B homolog (psmC4).